The chain runs to 154 residues: Myoglobin (154 aa).

In terms of domain architecture, Globin spans 2–148 (GLSDGEWELV…FRNDIAAKYK (147 aa)). At Ser-4 the chain carries Phosphoserine. Position 68 is a phosphothreonine (Thr-68). His-94 is a binding site for heme b.

Belongs to the globin family. As to quaternary structure, monomeric.

It localises to the cytoplasm. It is found in the sarcoplasm. It carries out the reaction Fe(III)-heme b-[protein] + nitric oxide + H2O = Fe(II)-heme b-[protein] + nitrite + 2 H(+). The catalysed reaction is H2O2 + AH2 = A + 2 H2O. Monomeric heme protein which primary function is to store oxygen and facilitate its diffusion within muscle tissues. Reversibly binds oxygen through a pentacoordinated heme iron and enables its timely and efficient release as needed during periods of heightened demand. Depending on the oxidative conditions of tissues and cells, and in addition to its ability to bind oxygen, it also has a nitrite reductase activity whereby it regulates the production of bioactive nitric oxide. Under stress conditions, like hypoxia and anoxia, it also protects cells against reactive oxygen species thanks to its pseudoperoxidase activity. This chain is Myoglobin (MB), found in Loxodonta africana (African elephant).